We begin with the raw amino-acid sequence, 389 residues long: Succinate--CoA ligase [ADP-forming] subunit beta (389 aa).

Positions 9–236 (KELFASHGVP…KDAEDPLEAK (228 aa)) constitute an ATP-grasp domain. ATP contacts are provided by residues lysine 45, 52 to 54 (GRG), serine 94, and glutamate 99. 2 residues coordinate Mg(2+): asparagine 191 and aspartate 205. Substrate-binding positions include asparagine 256 and 318 to 320 (GIT).

It belongs to the succinate/malate CoA ligase beta subunit family. Heterotetramer of two alpha and two beta subunits. Requires Mg(2+) as cofactor.

The enzyme catalyses succinate + ATP + CoA = succinyl-CoA + ADP + phosphate. It catalyses the reaction GTP + succinate + CoA = succinyl-CoA + GDP + phosphate. It participates in carbohydrate metabolism; tricarboxylic acid cycle; succinate from succinyl-CoA (ligase route): step 1/1. Functionally, succinyl-CoA synthetase functions in the citric acid cycle (TCA), coupling the hydrolysis of succinyl-CoA to the synthesis of either ATP or GTP and thus represents the only step of substrate-level phosphorylation in the TCA. The beta subunit provides nucleotide specificity of the enzyme and binds the substrate succinate, while the binding sites for coenzyme A and phosphate are found in the alpha subunit. This is Succinate--CoA ligase [ADP-forming] subunit beta from Saccharopolyspora erythraea (strain ATCC 11635 / DSM 40517 / JCM 4748 / NBRC 13426 / NCIMB 8594 / NRRL 2338).